Consider the following 443-residue polypeptide: ATP-dependent protease ATPase subunit HslU (443 aa).

ATP contacts are provided by residues valine 18, glycine 60–glutamate 65, aspartate 255, glutamate 321, and arginine 393.

It belongs to the ClpX chaperone family. HslU subfamily. As to quaternary structure, a double ring-shaped homohexamer of HslV is capped on each side by a ring-shaped HslU homohexamer. The assembly of the HslU/HslV complex is dependent on binding of ATP.

The protein resides in the cytoplasm. Its function is as follows. ATPase subunit of a proteasome-like degradation complex; this subunit has chaperone activity. The binding of ATP and its subsequent hydrolysis by HslU are essential for unfolding of protein substrates subsequently hydrolyzed by HslV. HslU recognizes the N-terminal part of its protein substrates and unfolds these before they are guided to HslV for hydrolysis. The polypeptide is ATP-dependent protease ATPase subunit HslU (Colwellia psychrerythraea (strain 34H / ATCC BAA-681) (Vibrio psychroerythus)).